We begin with the raw amino-acid sequence, 111 residues long: Large ribosomal subunit protein uL22 (111 aa).

The protein belongs to the universal ribosomal protein uL22 family. In terms of assembly, part of the 50S ribosomal subunit.

Functionally, this protein binds specifically to 23S rRNA; its binding is stimulated by other ribosomal proteins, e.g. L4, L17, and L20. It is important during the early stages of 50S assembly. It makes multiple contacts with different domains of the 23S rRNA in the assembled 50S subunit and ribosome. In terms of biological role, the globular domain of the protein is located near the polypeptide exit tunnel on the outside of the subunit, while an extended beta-hairpin is found that lines the wall of the exit tunnel in the center of the 70S ribosome. The polypeptide is Large ribosomal subunit protein uL22 (Xanthomonas oryzae pv. oryzae (strain PXO99A)).